We begin with the raw amino-acid sequence, 94 residues long: Large ribosomal subunit protein bL25 (94 aa).

It belongs to the bacterial ribosomal protein bL25 family. In terms of assembly, part of the 50S ribosomal subunit; part of the 5S rRNA/L5/L18/L25 subcomplex. Contacts the 5S rRNA. Binds to the 5S rRNA independently of L5 and L18.

Its function is as follows. This is one of the proteins that binds to the 5S RNA in the ribosome where it forms part of the central protuberance. The protein is Large ribosomal subunit protein bL25 of Klebsiella pneumoniae subsp. pneumoniae (strain ATCC 700721 / MGH 78578).